An 857-amino-acid chain; its full sequence is Envelope glycoprotein B (857 aa).

Residues 1–21 (MTRRRVLSVVVLLAALACRLG) form the signal peptide. Residues 22-732 (AQTPEQPAPP…SGFISFFKNP (711 aa)) lie on the Virion surface side of the membrane. 5 cysteine pairs are disulfide-bonded: Cys51-Cys528, Cys68-Cys484, Cys141-Cys206, Cys295-Cys342, and Cys551-Cys588. N-linked (GlcNAc...) asparagine; by host glycosylation occurs at Asn76. Residues 108 to 114 (IYNGWYA) are involved in fusion and/or binding to host membrane. Residue Asn163 is glycosylated (N-linked (GlcNAc...) asparagine; by host). The segment at 192–200 (GWLIWTYRT) is involved in fusion and/or binding to host membrane. N-linked (GlcNAc...) asparagine; by host glycans are attached at residues Asn290, Asn329, Asn348, and Asn395. Positions 398 to 452 (ELTTPTSSPPSSPSPPAPPAARGSTSAAVLRRRRRDAGNATTPVPPAAPGKSLGT) are disordered. The segment covering 404–416 (SSPPSSPSPPAPP) has biased composition (pro residues). 3 N-linked (GlcNAc...) asparagine; by host glycosylation sites follow: Asn436, Asn563, and Asn629. 2 hydrophobic membrane proximal region regions span residues 678–730 (LDNA…SFFK) and 709–729 (NLVS…ISFF). A helical membrane pass occupies residues 733 to 753 (FGGMLILVLVAGVVILVISLT). Residues 754-857 (RRTRQMSQQP…ALLGEAETEF (104 aa)) are Intravirion-facing. Positions 832-857 (FPGLRRRRYHDPETAAALLGEAETEF) are disordered. Residues 845-857 (TAAALLGEAETEF) are compositionally biased toward low complexity.

It belongs to the herpesviridae glycoprotein B family. In terms of assembly, homotrimer; disulfide-linked. Binds to heparan sulfate proteoglycans. Interacts with gH/gL heterodimer. Post-translationally, a proteolytic cleavage by host furin generates two subunits that remain linked by disulfide bonds.

The protein resides in the virion membrane. Its subcellular location is the host cell membrane. It localises to the host endosome membrane. The protein localises to the host Golgi apparatus membrane. In terms of biological role, envelope glycoprotein that forms spikes at the surface of virion envelope. Essential for the initial attachment to heparan sulfate moieties of the host cell surface proteoglycans. Involved in fusion of viral and cellular membranes leading to virus entry into the host cell. Following initial binding to its host receptors, membrane fusion is mediated by the fusion machinery composed at least of gB and the heterodimer gH/gL. May be involved in the fusion between the virion envelope and the outer nuclear membrane during virion egress. In Epstein-Barr virus (strain GD1) (HHV-4), this protein is Envelope glycoprotein B.